Here is a 717-residue protein sequence, read N- to C-terminus: Cleavage stimulation factor subunit 3 (717 aa).

Residue S2 is modified to N-acetylserine. HAT repeat units lie at residues 45-77, 79-110, 117-152, 163-196, 221-261, 271-303, 319-352, 354-387, and 458-494; these read QPIDKARKTYERLVAQFPSSGRFWKLYIEAEIK, KNYDKVEKLFQRCLMKVLHIDLWKCYLSYVRE, SYKEKMAQAYDFALDKIGMEIMSYQIWVDYINFLKG, QRITAVRRVYQRGCVNPMINIEQLWRDYNKYEEG, KEYE…WEKS, LITKRVMFAYEQCLLVLGHHPDIWYEAAQYLEQ, LFSDEAANIYERAISTLLKKNMLLYFAYADYEES, MKYEKVHSIYNRLLAIEDIDPTLVYIQYMKFARR, and NEDNNTRVLFERVLTSGSLPPEKSGEIWARFLAFESN. Residues 684-705 form a disordered region; the sequence is VKRPNEDSDEDEEKGAVVPPVH. Position 691 is a phosphoserine (S691).

As to quaternary structure, homodimer. The CSTF complex is composed of CSTF1 (50 kDa subunit), CSTF2 (64 kDa subunit) and CSTF3 (77 kDa subunit). CSTF3 directly interacts with CSTF1 and CSTF2. Interacts with FIP1L1.

It localises to the nucleus. One of the multiple factors required for polyadenylation and 3'-end cleavage of mammalian pre-mRNAs. This is Cleavage stimulation factor subunit 3 (CSTF3) from Homo sapiens (Human).